A 250-amino-acid chain; its full sequence is Expansin-like B1 (250 aa).

The signal sequence occupies residues 1–24; sequence MKHSHVLLLLFVQVIVLLPLLCLS. One can recognise an Expansin-like EG45 domain in the interval 45-149; sequence RGHCGYGEFG…QRIPCRYAGY (105 aa). The N-linked (GlcNAc...) asparagine glycan is linked to asparagine 72. One can recognise an Expansin-like CBD domain in the interval 163–245; sequence HYLAILVLYV…DWTAGATYDS (83 aa).

Belongs to the expansin family. Expansin-like B subfamily.

Its subcellular location is the secreted. The protein is Expansin-like B1 (EXLB1) of Arabidopsis thaliana (Mouse-ear cress).